A 309-amino-acid chain; its full sequence is uncharacterized protein (309 aa).

Positions 1–16 (MAGNSRRRGAVRKAGT) are enriched in basic residues. Residues 1-70 (MAGNSRRRGA…AKRTEETETV (70 aa)) are disordered. Positions 261, 281, and 290 each coordinate S-adenosyl-L-methionine.

It belongs to the class IV-like SAM-binding methyltransferase superfamily. RNA methyltransferase TrmH family.

This is an uncharacterized protein from Mycolicibacterium paratuberculosis (strain ATCC BAA-968 / K-10) (Mycobacterium paratuberculosis).